A 239-amino-acid polypeptide reads, in one-letter code: 1-(5-phosphoribosyl)-5-[(5-phosphoribosylamino)methylideneamino] imidazole-4-carboxamide isomerase (239 aa).

Residue aspartate 8 is the Proton acceptor of the active site. Catalysis depends on aspartate 130, which acts as the Proton donor.

It belongs to the HisA/HisF family.

The protein localises to the cytoplasm. The enzyme catalyses 1-(5-phospho-beta-D-ribosyl)-5-[(5-phospho-beta-D-ribosylamino)methylideneamino]imidazole-4-carboxamide = 5-[(5-phospho-1-deoxy-D-ribulos-1-ylimino)methylamino]-1-(5-phospho-beta-D-ribosyl)imidazole-4-carboxamide. It functions in the pathway amino-acid biosynthesis; L-histidine biosynthesis; L-histidine from 5-phospho-alpha-D-ribose 1-diphosphate: step 4/9. In Streptococcus thermophilus (strain ATCC BAA-491 / LMD-9), this protein is 1-(5-phosphoribosyl)-5-[(5-phosphoribosylamino)methylideneamino] imidazole-4-carboxamide isomerase.